The following is a 314-amino-acid chain: Methionyl-tRNA formyltransferase (314 aa).

Position 110-113 (110-113 (SLLP)) interacts with (6S)-5,6,7,8-tetrahydrofolate.

It belongs to the Fmt family.

It catalyses the reaction L-methionyl-tRNA(fMet) + (6R)-10-formyltetrahydrofolate = N-formyl-L-methionyl-tRNA(fMet) + (6S)-5,6,7,8-tetrahydrofolate + H(+). Functionally, attaches a formyl group to the free amino group of methionyl-tRNA(fMet). The formyl group appears to play a dual role in the initiator identity of N-formylmethionyl-tRNA by promoting its recognition by IF2 and preventing the misappropriation of this tRNA by the elongation apparatus. In Bacillus cereus (strain AH187), this protein is Methionyl-tRNA formyltransferase.